We begin with the raw amino-acid sequence, 482 residues long: D-inositol 3-phosphate glycosyltransferase (482 aa).

H63 serves as a coordination point for 1D-myo-inositol 3-phosphate. Residues 69-70 (QP) and G77 contribute to the UDP-N-acetyl-alpha-D-glucosamine site. Residues 74-79 (DAGGMN), K132, Y165, T189, and R209 contribute to the 1D-myo-inositol 3-phosphate site. Residues R289, K294, and Q355 each coordinate UDP-N-acetyl-alpha-D-glucosamine. The Mg(2+) site is built by Y364, R365, and A367. UDP-N-acetyl-alpha-D-glucosamine contacts are provided by E377 and E385. T391 is a Mg(2+) binding site.

It belongs to the glycosyltransferase group 1 family. MshA subfamily. In terms of assembly, homodimer.

The enzyme catalyses 1D-myo-inositol 3-phosphate + UDP-N-acetyl-alpha-D-glucosamine = 1D-myo-inositol 2-acetamido-2-deoxy-alpha-D-glucopyranoside 3-phosphate + UDP + H(+). Catalyzes the transfer of a N-acetyl-glucosamine moiety to 1D-myo-inositol 3-phosphate to produce 1D-myo-inositol 2-acetamido-2-deoxy-glucopyranoside 3-phosphate in the mycothiol biosynthesis pathway. The sequence is that of D-inositol 3-phosphate glycosyltransferase from Salinispora tropica (strain ATCC BAA-916 / DSM 44818 / JCM 13857 / NBRC 105044 / CNB-440).